The primary structure comprises 122 residues: UPF0102 protein RL0336 (122 aa).

The protein belongs to the UPF0102 family.

This Rhizobium johnstonii (strain DSM 114642 / LMG 32736 / 3841) (Rhizobium leguminosarum bv. viciae) protein is UPF0102 protein RL0336.